The sequence spans 347 residues: Holliday junction branch migration complex subunit RuvB (347 aa).

Residues 1–183 (MTPPSRIVTP…FGIPIRLNFY (183 aa)) are large ATPase domain (RuvB-L). ATP-binding positions include Leu-22, Arg-23, Gly-64, Lys-67, Thr-68, Thr-69, 130 to 132 (EDF), Arg-173, Tyr-183, and Arg-220. Thr-68 is a binding site for Mg(2+). The small ATPAse domain (RuvB-S) stretch occupies residues 184–254 (TVEELEGIVS…IADHALSALE (71 aa)). The segment at 257–347 (AAGLDAMDRR…QFGLFGGDEE (91 aa)) is head domain (RuvB-H). 3 residues coordinate DNA: Arg-293, Arg-312, and Arg-317.

The protein belongs to the RuvB family. Homohexamer. Forms an RuvA(8)-RuvB(12)-Holliday junction (HJ) complex. HJ DNA is sandwiched between 2 RuvA tetramers; dsDNA enters through RuvA and exits via RuvB. An RuvB hexamer assembles on each DNA strand where it exits the tetramer. Each RuvB hexamer is contacted by two RuvA subunits (via domain III) on 2 adjacent RuvB subunits; this complex drives branch migration. In the full resolvosome a probable DNA-RuvA(4)-RuvB(12)-RuvC(2) complex forms which resolves the HJ.

It is found in the cytoplasm. The catalysed reaction is ATP + H2O = ADP + phosphate + H(+). The RuvA-RuvB-RuvC complex processes Holliday junction (HJ) DNA during genetic recombination and DNA repair, while the RuvA-RuvB complex plays an important role in the rescue of blocked DNA replication forks via replication fork reversal (RFR). RuvA specifically binds to HJ cruciform DNA, conferring on it an open structure. The RuvB hexamer acts as an ATP-dependent pump, pulling dsDNA into and through the RuvAB complex. RuvB forms 2 homohexamers on either side of HJ DNA bound by 1 or 2 RuvA tetramers; 4 subunits per hexamer contact DNA at a time. Coordinated motions by a converter formed by DNA-disengaged RuvB subunits stimulates ATP hydrolysis and nucleotide exchange. Immobilization of the converter enables RuvB to convert the ATP-contained energy into a lever motion, pulling 2 nucleotides of DNA out of the RuvA tetramer per ATP hydrolyzed, thus driving DNA branch migration. The RuvB motors rotate together with the DNA substrate, which together with the progressing nucleotide cycle form the mechanistic basis for DNA recombination by continuous HJ branch migration. Branch migration allows RuvC to scan DNA until it finds its consensus sequence, where it cleaves and resolves cruciform DNA. The sequence is that of Holliday junction branch migration complex subunit RuvB from Rhodopseudomonas palustris (strain BisA53).